We begin with the raw amino-acid sequence, 413 residues long: MKFGSLLGLSLVGLSVASPVTNVWKSPRAADDFIRGVNLGGWLVLEPWITPGIFEEGGDSAVDEWTLSAALGHRAHERLKLHWNTFMEQKDFDRIKGAGLTHVRIPIGYWAVAPIQGEPFVQGQVDMLDAAIDWARHSGLKVNVDLHGAPGSQNGFDNSGRLGPANWQKGDTVAQTYKALDVLIQRYAKKDGVVDEINLINEPFPQAGIQVEPLKDYYRQGAAKVKSANPNVAVVISDAFMGPSKWNGFDVGAKTIIDTHHYQVFSPQLVAMDINQHVKAACDFGNDELAKSSIPAIVGEWCGALTDCTQYLNGRHEGARYDGTHKDSDPKTAVPNGCVRKTGGSASQLTDEEKTNTRRYIEAQLDSFSKGHGWFWWTWKTERGSPGWDLNDLLSNGLFPQPLDSRMFLGQCN.

Residues 1-17 (MKFGSLLGLSLVGLSVA) form the signal peptide. The substrate site is built by Glu46, Glu202, and Tyr262. Glu202 functions as the Proton donor in the catalytic mechanism. Cys282 and Cys412 are disulfide-bonded. Glu300 acts as the Nucleophile in catalysis.

This sequence belongs to the glycosyl hydrolase 5 (cellulase A) family. Monomer.

It localises to the secreted. It is found in the cell wall. The enzyme catalyses Successive hydrolysis of beta-D-glucose units from the non-reducing ends of (1-&gt;3)-beta-D-glucans, releasing alpha-glucose.. Major glucan 1,3-beta-glucosidase required for cell wall integrity. Beta-glucanases participate in the metabolism of beta-glucan, the main structural component of the cell wall. Can also function biosynthetically as a transglycosylase. Functions to deliver glucan from the cell to the extracellular matrix. Involved in cell-substrate and cell-cell adhesion. This Arthroderma benhamiae (strain ATCC MYA-4681 / CBS 112371) (Trichophyton mentagrophytes) protein is Probable glucan 1,3-beta-glucosidase ARB_04467.